A 369-amino-acid polypeptide reads, in one-letter code: Flagellar P-ring protein (369 aa).

The first 24 residues, 1 to 24, serve as a signal peptide directing secretion; that stretch reads MKTLHRCIGVALLALGALAGTAHA.

It belongs to the FlgI family. As to quaternary structure, the basal body constitutes a major portion of the flagellar organelle and consists of four rings (L,P,S, and M) mounted on a central rod.

Its subcellular location is the periplasm. It localises to the bacterial flagellum basal body. Assembles around the rod to form the L-ring and probably protects the motor/basal body from shearing forces during rotation. This is Flagellar P-ring protein from Ralstonia nicotianae (strain ATCC BAA-1114 / GMI1000) (Ralstonia solanacearum).